Here is a 156-residue protein sequence, read N- to C-terminus: Large ribosomal subunit protein uL15 (156 aa).

A disordered region spans residues 29–48; that stretch reads CGKGKTSGRGHKGQKARSGV. The span at 34–43 shows a compositional bias: basic residues; sequence TSGRGHKGQK.

It belongs to the universal ribosomal protein uL15 family. As to quaternary structure, part of the 50S ribosomal subunit.

In terms of biological role, binds to the 23S rRNA. The sequence is that of Large ribosomal subunit protein uL15 from Ehrlichia chaffeensis (strain ATCC CRL-10679 / Arkansas).